Here is a 350-residue protein sequence, read N- to C-terminus: Glutamyl-tRNA reductase (350 aa).

Substrate-binding positions include 53 to 56 (TCNR), serine 105, 110 to 112 (ETQ), and glutamine 116. Cysteine 54 (nucleophile) is an active-site residue. 185–190 (GAGETA) is a binding site for NADP(+).

The protein belongs to the glutamyl-tRNA reductase family. Homodimer.

The enzyme catalyses (S)-4-amino-5-oxopentanoate + tRNA(Glu) + NADP(+) = L-glutamyl-tRNA(Glu) + NADPH + H(+). The protein operates within porphyrin-containing compound metabolism; protoporphyrin-IX biosynthesis; 5-aminolevulinate from L-glutamyl-tRNA(Glu): step 1/2. Catalyzes the NADPH-dependent reduction of glutamyl-tRNA(Glu) to glutamate 1-semialdehyde (GSA). The chain is Glutamyl-tRNA reductase from Deinococcus radiodurans (strain ATCC 13939 / DSM 20539 / JCM 16871 / CCUG 27074 / LMG 4051 / NBRC 15346 / NCIMB 9279 / VKM B-1422 / R1).